Consider the following 146-residue polypeptide: Large ribosomal subunit protein uL15 (146 aa).

The segment at 1–57 (MKLFELQPAPGSKKLPKRKGRGHGTGNGKTAGRGHKGQNARSGGGVRPGFEGGQMPL) is disordered. The segment covering 42-52 (SGGGVRPGFEG) has biased composition (gly residues).

This sequence belongs to the universal ribosomal protein uL15 family. In terms of assembly, part of the 50S ribosomal subunit.

Functionally, binds to the 23S rRNA. This chain is Large ribosomal subunit protein uL15, found in Acetivibrio thermocellus (strain ATCC 27405 / DSM 1237 / JCM 9322 / NBRC 103400 / NCIMB 10682 / NRRL B-4536 / VPI 7372) (Clostridium thermocellum).